The sequence spans 105 residues: Cuticle protein AMP1A (105 aa).

Residues 1–21 (DRDAQTLTDERSDQGDGNFRY) form a disordered region. The Chitin-binding type R&amp;R domain occupies 16–81 (DGNFRYEFET…PSSDLLPVGP (66 aa)).

As to expression, arthrodial membrane.

The polypeptide is Cuticle protein AMP1A (Homarus americanus (American lobster)).